The chain runs to 557 residues: Dihydroxy-acid dehydratase (557 aa).

Asp78 lines the Mg(2+) pocket. Residue Cys119 participates in [2Fe-2S] cluster binding. Residues Asp120 and Lys121 each coordinate Mg(2+). Lys121 carries the N6-carboxylysine modification. Position 192 (Cys192) interacts with [2Fe-2S] cluster. Mg(2+) is bound at residue Glu446. Ser472 functions as the Proton acceptor in the catalytic mechanism.

This sequence belongs to the IlvD/Edd family. Homodimer. The cofactor is [2Fe-2S] cluster. Mg(2+) is required as a cofactor.

It catalyses the reaction (2R)-2,3-dihydroxy-3-methylbutanoate = 3-methyl-2-oxobutanoate + H2O. The enzyme catalyses (2R,3R)-2,3-dihydroxy-3-methylpentanoate = (S)-3-methyl-2-oxopentanoate + H2O. The protein operates within amino-acid biosynthesis; L-isoleucine biosynthesis; L-isoleucine from 2-oxobutanoate: step 3/4. It functions in the pathway amino-acid biosynthesis; L-valine biosynthesis; L-valine from pyruvate: step 3/4. Functions in the biosynthesis of branched-chain amino acids. Catalyzes the dehydration of (2R,3R)-2,3-dihydroxy-3-methylpentanoate (2,3-dihydroxy-3-methylvalerate) into 2-oxo-3-methylpentanoate (2-oxo-3-methylvalerate) and of (2R)-2,3-dihydroxy-3-methylbutanoate (2,3-dihydroxyisovalerate) into 2-oxo-3-methylbutanoate (2-oxoisovalerate), the penultimate precursor to L-isoleucine and L-valine, respectively. The chain is Dihydroxy-acid dehydratase from Campylobacter fetus subsp. fetus (strain 82-40).